The chain runs to 89 residues: Neurotoxin beta-KTx 12 (89 aa).

A signal peptide spans 1-20 (MKQYIFFLALIVLVSTFAEA). The propeptide occupies 21–39 (GKKTEILDKVKKVFSKAKD). Positions 53-89 (ELGCPFIDKWCEDHCESKKLVGKCENFDCSCVKLGGK) constitute a BetaSPN-type CS-alpha/beta domain. Cystine bridges form between cysteine 56–cysteine 76, cysteine 63–cysteine 81, and cysteine 67–cysteine 83.

The protein belongs to the long chain scorpion toxin family. Class 2 subfamily. Expressed by the venom gland.

Its subcellular location is the secreted. In terms of biological role, inhibits voltage-gated potassium channel. The protein is Neurotoxin beta-KTx 12 of Lychas mucronatus (Chinese swimming scorpion).